Consider the following 198-residue polypeptide: MASQPPQEPTPTATSTPSTSALASLPPHLDPTTYPRTLTSPTHNIHLELTYSPLNPSQALTHTSSPAAGANVLFLGTTRDTFEGRAVSQLSYTCYPPLALKTLLDIATKAAEKFRLEGVYIAHRLGVVPIQESSIVVAVSAGHRGMAWRAGEEVLEEVKARLEVWKREEFVDGGMEWRENRERDAEGKVVAEKQEERE.

The span at 1–27 (MASQPPQEPTPTATSTPSTSALASLPP) shows a compositional bias: low complexity. Residues 1 to 40 (MASQPPQEPTPTATSTPSTSALASLPPHLDPTTYPRTLTS) are disordered. Residues 143–144 (HR), Lys-159, and 166–168 (KRE) contribute to the substrate site. The interval 176-198 (EWRENRERDAEGKVVAEKQEERE) is disordered.

It belongs to the MoaE family. MOCS2B subfamily. As to quaternary structure, heterotetramer; composed of 2 small (MOCS2A) and 2 large (MOCS2B) subunits.

It localises to the cytoplasm. The catalysed reaction is 2 [molybdopterin-synthase sulfur-carrier protein]-C-terminal-Gly-aminoethanethioate + cyclic pyranopterin phosphate + H2O = molybdopterin + 2 [molybdopterin-synthase sulfur-carrier protein]-C-terminal Gly-Gly + 2 H(+). The protein operates within cofactor biosynthesis; molybdopterin biosynthesis. In terms of biological role, catalytic subunit of the molybdopterin synthase complex, a complex that catalyzes the conversion of precursor Z into molybdopterin. Acts by mediating the incorporation of 2 sulfur atoms from thiocarboxylated MOCS2A into precursor Z to generate a dithiolene group. The protein is Molybdopterin synthase catalytic subunit of Aspergillus clavatus (strain ATCC 1007 / CBS 513.65 / DSM 816 / NCTC 3887 / NRRL 1 / QM 1276 / 107).